The primary structure comprises 369 residues: Pyruvate dehydrogenase E1 component subunit alpha (369 aa).

Heterodimer of an alpha and a beta chain. Requires thiamine diphosphate as cofactor.

The catalysed reaction is N(6)-[(R)-lipoyl]-L-lysyl-[protein] + pyruvate + H(+) = N(6)-[(R)-S(8)-acetyldihydrolipoyl]-L-lysyl-[protein] + CO2. Its function is as follows. The pyruvate dehydrogenase complex catalyzes the overall conversion of pyruvate to acetyl-CoA and CO(2). It contains multiple copies of three enzymatic components: pyruvate dehydrogenase (E1), dihydrolipoamide acetyltransferase (E2) and lipoamide dehydrogenase (E3). This chain is Pyruvate dehydrogenase E1 component subunit alpha (pdhA), found in Geobacillus stearothermophilus (Bacillus stearothermophilus).